Consider the following 519-residue polypeptide: Cytochrome P450 monooxygenase FPY7 (519 aa).

A helical transmembrane segment spans residues serine 12 to threonine 34. Residue cysteine 465 coordinates heme.

This sequence belongs to the cytochrome P450 family. Heme serves as cofactor.

It is found in the membrane. It participates in secondary metabolite biosynthesis. Its function is as follows. Cytochrome P450 monooxygenase; part of the gene cluster that mediates the biosynthesis of the gamma-pyrones fusapyrone (FPY) and deoxyfusapyrone (dFPY). FPY is an undecaketide and thus likely synthesized by the polyketide synthase FPY1 from acetyl-CoA functioning as starter unit and the addition of 10 malonyl-CoA extender units by successive Claisen-condensations. Next to this, FPY shares some rare features: C-glycosylated 4-deoxyglucose at C-3, a gem-dimethyl group at C-13, and an alpha-beta to beta-gamma double bond shift at C-20. During FPY biosynthesis mono-C-methyl groups are transferred to the tetra-, penta-, hexa- and heptaketide, while two C-methyl groups are transferred to the nonaketide, suggesting that the CMet domain is programmed to selectively catalyze two successive C-alpha-methylation reactions of the nonaketide, while other alpha-carbons are non- or mono-methylated only. While the origin of the 4'-deoxyglucose moiety remains opaque, its transfer to C-3 is most likely mediated by the C-glycosyltransferase FPY2. Next to this, the hydroxyl group present at C-33 and discriminating between FPY and dFPY, is likely to be installed by the cytochrome P450 monooxygenase FPY7. No putative function can be predicted for the remaining genes FPY3-FPY6. The chain is Cytochrome P450 monooxygenase FPY7 from Fusarium mangiferae (Mango malformation disease fungus).